Consider the following 547-residue polypeptide: Chaperonin GroEL (547 aa).

ATP-binding positions include 30–33 (TLGP), lysine 51, 87–91 (DGTTT), glycine 415, 479–481 (NAA), and aspartate 495.

Belongs to the chaperonin (HSP60) family. As to quaternary structure, forms a cylinder of 14 subunits composed of two heptameric rings stacked back-to-back. Interacts with the co-chaperonin GroES.

Its subcellular location is the cytoplasm. It carries out the reaction ATP + H2O + a folded polypeptide = ADP + phosphate + an unfolded polypeptide.. Together with its co-chaperonin GroES, plays an essential role in assisting protein folding. The GroEL-GroES system forms a nano-cage that allows encapsulation of the non-native substrate proteins and provides a physical environment optimized to promote and accelerate protein folding. The protein is Chaperonin GroEL of Delftia acidovorans (strain DSM 14801 / SPH-1).